The sequence spans 458 residues: MALWGGRFQQEADAKFKFFNDSLRFDYRLALQDIDGSIGWAKAITAVGILTEAECAKLVDALKTLRAEIEPNIAIILRDAAEDIHSWVESKLIEKVGDLGKKLHTGRSRNDQVALDMKMWCKVQVIVLQQCIRNLQHKLVATAEDNQQTIMPGYTHLQRAQPISFAHWCMAYYEMLERDYTRLTDAYQRMHTCPLGCGALAGSAYPIDRDQLAQDLHFEIATRNSLDSVSDRDHLLELLASASISMVHLSRFAEDLIFFNSGESAFLELSDRVTSGSSLMPQKKNPDACELIRGKSGRVFGALSGLLTTLKGLPLAYNKDMQEDKEGIFDAVETWQACLEMATLVLEDINVNVVRTSEAAQQGYSNATELADYLVAKGIPFREAHHIVGETVVYAIQQRKPLEALSVTEFKQFHSVIDQDVYAILSLPSCLAKRSAKGGVNPSRVKEAIEVAKQHLAS.

It belongs to the lyase 1 family. Argininosuccinate lyase subfamily.

It is found in the cytoplasm. It carries out the reaction 2-(N(omega)-L-arginino)succinate = fumarate + L-arginine. It functions in the pathway amino-acid biosynthesis; L-arginine biosynthesis; L-arginine from L-ornithine and carbamoyl phosphate: step 3/3. In Haemophilus ducreyi (strain 35000HP / ATCC 700724), this protein is Argininosuccinate lyase.